Here is a 465-residue protein sequence, read N- to C-terminus: Tyrosine 3-monooxygenase (465 aa).

Fe cation contacts are provided by histidine 294, histidine 299, and glutamate 339.

This sequence belongs to the biopterin-dependent aromatic amino acid hydroxylase family. Fe(2+) is required as a cofactor.

Its subcellular location is the cytoplasm. The protein resides in the perinuclear region. It catalyses the reaction (6R)-L-erythro-5,6,7,8-tetrahydrobiopterin + L-tyrosine + O2 = (4aS,6R)-4a-hydroxy-L-erythro-5,6,7,8-tetrahydrobiopterin + L-dopa. The protein operates within catecholamine biosynthesis; dopamine biosynthesis; dopamine from L-tyrosine: step 1/2. The polypeptide is Tyrosine 3-monooxygenase (TH) (Schistosoma mansoni (Blood fluke)).